The primary structure comprises 598 residues: NADH-quinone oxidoreductase subunit C/D (598 aa).

Residues 1–188 are NADH dehydrogenase I subunit C; it reads MTDSTTHDAL…DPFVLTKQKE (188 aa). The interval 212-598 is NADH dehydrogenase I subunit D; it reads DFMFLNLGPN…IDFVMSDVDR (387 aa).

The protein in the N-terminal section; belongs to the complex I 30 kDa subunit family. This sequence in the C-terminal section; belongs to the complex I 49 kDa subunit family. In terms of assembly, NDH-1 is composed of 13 different subunits. Subunits NuoB, CD, E, F, and G constitute the peripheral sector of the complex.

Its subcellular location is the cell inner membrane. The catalysed reaction is a quinone + NADH + 5 H(+)(in) = a quinol + NAD(+) + 4 H(+)(out). Functionally, NDH-1 shuttles electrons from NADH, via FMN and iron-sulfur (Fe-S) centers, to quinones in the respiratory chain. The immediate electron acceptor for the enzyme in this species is believed to be ubiquinone. Couples the redox reaction to proton translocation (for every two electrons transferred, four hydrogen ions are translocated across the cytoplasmic membrane), and thus conserves the redox energy in a proton gradient. This chain is NADH-quinone oxidoreductase subunit C/D, found in Serratia proteamaculans (strain 568).